The sequence spans 260 residues: Cytosolic Fe-S cluster assembly factor Nubp2 homolog (260 aa).

Residue 14–21 (GKGGVGKS) participates in ATP binding. 2 residues coordinate [4Fe-4S] cluster: C188 and C191.

It belongs to the Mrp/NBP35 ATP-binding proteins family. NUBP2/CFD1 subfamily. In terms of assembly, heterotetramer of 2 Nubp1 and 2 Nubp2 chains. The cofactor is [4Fe-4S] cluster.

The protein localises to the cytoplasm. Its function is as follows. Component of the cytosolic iron-sulfur (Fe/S) protein assembly (CIA) machinery. Required for maturation of extramitochondrial Fe-S proteins. The Nubp1-Nubp2 heterotetramer forms a Fe-S scaffold complex, mediating the de novo assembly of an Fe-S cluster and its transfer to target apoproteins. In Drosophila melanogaster (Fruit fly), this protein is Cytosolic Fe-S cluster assembly factor Nubp2 homolog.